A 106-amino-acid chain; its full sequence is Immunity protein CdiI (106 aa).

As to quaternary structure, forms a contact-dependent growth inhibition complex of CdiA-CT-NC101, CdiI-NC101 and EF-Tu; the complex is a dimer of heterotrimers.

Functionally, immunity protein component of a toxin-immunity protein module, which functions as a cellular contact-dependent growth inhibition (CDI) system. CDI modules allow bacteria to communicate with and inhibit the growth of closely related neighboring bacteria in a contact-dependent fashion. Neutralizes the toxic activity of cognate toxin CdiA-NC101 (the C-terminal 154 residue CT fragment). Does not inhibit toxic activity of CdiA from other toxin-immunity modules or strains of E.coli. Mediates dimerization of the ternary CdiA-CT-NC101, CdiI-NC101 and EF-Tu complex; both CdiI molecules contact both EF-Tu molecules. This Escherichia coli (strain NC101) protein is Immunity protein CdiI.